Reading from the N-terminus, the 323-residue chain is Cyclin-D5-1 (323 aa).

2 disordered regions span residues 17 to 36 and 281 to 323; these read ESSL…KQEP and HMTP…MRRL.

It belongs to the cyclin family. Cyclin D subfamily.

The chain is Cyclin-D5-1 (CYCD5-1) from Arabidopsis thaliana (Mouse-ear cress).